The primary structure comprises 218 residues: GTP cyclohydrolase 1 (218 aa).

3 residues coordinate Zn(2+): Cys-109, His-112, and Cys-180.

This sequence belongs to the GTP cyclohydrolase I family. Toroid-shaped homodecamer, composed of two pentamers of five dimers.

It carries out the reaction GTP + H2O = 7,8-dihydroneopterin 3'-triphosphate + formate + H(+). The protein operates within cofactor biosynthesis; 7,8-dihydroneopterin triphosphate biosynthesis; 7,8-dihydroneopterin triphosphate from GTP: step 1/1. The protein is GTP cyclohydrolase 1 of Aeromonas salmonicida (strain A449).